Consider the following 309-residue polypeptide: Tumor necrosis factor ligand superfamily member 9 (309 aa).

The segment covering 1 to 16 (MDQHTLDVEDTADARH) has biased composition (basic and acidic residues). The disordered stretch occupies residues 1–20 (MDQHTLDVEDTADARHPAGT). At 1–82 (MDQHTLDVED…ALNFCSRHPK (82 aa)) the chain is on the cytoplasmic side. A helical; Signal-anchor for type II membrane protein membrane pass occupies residues 83–103 (LYGLVALVLLLLIAACVPIFT). Residues 104 to 309 (RTEPRPALTI…FLVKPDNPWE (206 aa)) lie on the Extracellular side of the membrane. Residues Asn-139, Asn-161, and Asn-293 are each glycosylated (N-linked (GlcNAc...) asparagine). One can recognise a THD domain in the interval 147 to 302 (VFAKLLAKNQ…NTTSFGLFLV (156 aa)).

This sequence belongs to the tumor necrosis factor family. Homotrimer.

Its subcellular location is the membrane. Functionally, cytokine that binds to TNFRSF9. Induces the proliferation of activated peripheral blood T-cells. May have a role in activation-induced cell death (AICD). May play a role in cognate interactions between T-cells and B-cells/macrophages. In Mus musculus (Mouse), this protein is Tumor necrosis factor ligand superfamily member 9 (Tnfsf9).